We begin with the raw amino-acid sequence, 326 residues long: MIEKLWYQRSWLNWLFAPFAALFALLTTMRRYAYRAGIFSSYRAPVPVIVVGNITVGGNGKTPMVLWLVELLTKAGYKPGVVSRGYGGKAPHYPYLLHPETTAAEAGDEPVLIYQRCGCPVAVAPKRAKAVQLLVEQCGVDVIICDDGLQHYALQRDIEFVVMDGERRLGNGWLMPMGPLRETASRLRQVMAVVCNGGQARPDEIQMSLQPAPLRNVRTNHTAVVSGAVDAMAGIGYPPRFFNSLLKQGYAVNQQVAYADHQAFNAAELHQRFAQRPLIMTEKDAVKCRDFALDNWWYLPVTAQLPEKFATRLLAQLKELRHGAGL.

55–62 (TVGGNGKT) contacts ATP.

The protein belongs to the LpxK family.

It catalyses the reaction a lipid A disaccharide + ATP = a lipid IVA + ADP + H(+). It functions in the pathway glycolipid biosynthesis; lipid IV(A) biosynthesis; lipid IV(A) from (3R)-3-hydroxytetradecanoyl-[acyl-carrier-protein] and UDP-N-acetyl-alpha-D-glucosamine: step 6/6. Functionally, transfers the gamma-phosphate of ATP to the 4'-position of a tetraacyldisaccharide 1-phosphate intermediate (termed DS-1-P) to form tetraacyldisaccharide 1,4'-bis-phosphate (lipid IVA). The chain is Tetraacyldisaccharide 4'-kinase from Tolumonas auensis (strain DSM 9187 / NBRC 110442 / TA 4).